We begin with the raw amino-acid sequence, 2871 residues long: Fibrillin-1 (2871 aa).

A signal peptide spans M1 to G24. Positions A25–R44 are excised as a propeptide. The segment at R45 to I81 is fibrillin unique N-terminal (FUN) domain. An N-terminal domain region spans residues R45–T450. 11 disulfides stabilise this stretch: C59/C68, C67/C80, C85/C94, C89/C100, C102/C111, C119/C129, C123/C134, C136/C145, C150/C160, C154/C166, and C168/C177. EGF-like domains are found at residues I81–G112, S115–G146, and Q147–E178. The tract at residues C119–I329 is interaction with MFAP4. The 53-residue stretch at G184 to I236 folds into the TB 1 domain. Residues C195 to C221 are hybrid domain 1. In terms of domain architecture, EGF-like 4; calcium-binding spans D246–E287. Disulfide bonds link C250–C262, C257–C271, C273–C286, C292–C304, C299–C313, and C315–C328. O-linked (Glc) serine glycosylation is present at S268. In terms of domain architecture, EGF-like 5; calcium-binding spans D288–I329. In terms of domain architecture, TB 2 spans G334 to C389. N-linked (GlcNAc...) asparagine glycosylation occurs at N448. One can recognise an EGF-like 6 domain in the interval V449–I489. 15 cysteine pairs are disulfide-bonded: C453–C465, C460–C474, C476–C488, C494–C504, C499–C513, C515–C528, C534–C546, C541–C555, C557–C570, C576–C587, C582–C596, C598–C611, C617–C628, C623–C637, and C639–C652. S471 carries O-linked (Glc) serine glycosylation. Positions D490–R529 constitute an EGF-like 7; calcium-binding domain. S510 carries O-linked (Glc) serine glycosylation. The 42-residue stretch at D530 to E571 folds into the EGF-like 8; calcium-binding domain. O-linked (Glc) serine glycosylation is present at S552. The 41-residue stretch at D572–K612 folds into the EGF-like 9; calcium-binding domain. An O-linked (Glc) serine glycan is attached at S593. The 41-residue stretch at D613–V653 folds into the EGF-like 10; calcium-binding domain. S634 is a glycosylation site (O-linked (Glc) serine). The region spanning S659–C711 is the TB 3 domain. The region spanning D723–V764 is the EGF-like 11; calcium-binding domain. Disulfide bonds link C727–C739, C734–C748, C750–C763, C769–C781, C776–C790, C792–C805, C811–C821, C816–C830, C832–C845, C853–C875, C862–C887, C876–C890, C896–C908, C914–C926, C921–C935, and C937–C950. The EGF-like 12; calcium-binding domain maps to D765–E806. S787 carries an O-linked (Glc) serine glycan. An EGF-like 13; calcium-binding domain is found at D807–I846. S827 carries an O-linked (Glc) serine glycan. Positions G851 to R902 constitute a TB 4 domain. The interval C862–C887 is hybrid domain 2. The EGF-like 14; calcium-binding domain maps to D910 to L951. Residues E956–C1008 form the TB 5 domain. Positions D1028–T1069 constitute an EGF-like 15; calcium-binding domain. Disulfide bonds link C1032-C1044, C1039-C1053, C1055-C1068, C1074-C1086, C1081-C1095, C1097-C1111, C1117-C1129, C1124-C1138, C1140-C1153, C1159-C1171, C1166-C1180, C1182-C1195, C1201-C1212, C1208-C1221, C1223-C1236, C1242-C1254, C1249-C1263, C1265-C1278, C1284-C1296, C1291-C1305, C1307-C1320, C1326-C1339, C1333-C1348, C1350-C1361, C1367-C1380, C1374-C1389, C1391-C1402, C1408-C1420, C1415-C1429, C1431-C1444, C1450-C1461, C1456-C1470, C1472-C1485, C1491-C1502, C1497-C1511, C1513-C1526, C1534-C1562, C1549-C1574, C1563-C1577, C1564-C1589, C1610-C1622, C1617-C1631, C1633-C1646, C1652-C1663, C1658-C1672, and C1674-C1687. O-linked (Glc) serine glycosylation occurs at S1050. The N-linked (GlcNAc...) asparagine glycan is linked to N1067. Positions D1070 to M1112 constitute an EGF-like 16; calcium-binding domain. Residues D1113 to I1154 form the EGF-like 17; calcium-binding domain. An O-linked (Glc) serine glycan is attached at S1135. A glycan (N-linked (GlcNAc...) asparagine) is linked at N1149. Positions D1155–V1196 constitute an EGF-like 18; calcium-binding domain. The EGF-like 19; calcium-binding domain occupies D1197 to T1237. S1218 is a glycosylation site (O-linked (Glc) serine). The region spanning D1238 to V1279 is the EGF-like 20; calcium-binding domain. One can recognise an EGF-like 21; calcium-binding domain in the interval D1280–T1321. S1302 carries O-linked (Glc) serine glycosylation. Positions D1322–T1362 constitute an EGF-like 22; calcium-binding domain. S1345 carries O-linked (Glc) serine glycosylation. The EGF-like 23; calcium-binding domain maps to D1363–T1403. A glycan (N-linked (GlcNAc...) asparagine) is linked at N1369. S1386 is a glycosylation site (O-linked (Glc) serine). The EGF-like 24; calcium-binding domain maps to D1404–E1445. The 41-residue stretch at D1446 to T1486 folds into the EGF-like 25; calcium-binding domain. The N-linked (GlcNAc...) asparagine glycan is linked to N1484. Residues D1487–V1527 form the EGF-like 26; calcium-binding domain. The O-linked (Glc) serine glycan is linked to S1508. The interval D1528–R2731 is C-terminal domain. Positions G1532–C1589 constitute a TB 6 domain. Residues R1541–D1543 carry the Cell attachment site motif. N1581 carries N-linked (GlcNAc...) asparagine glycosylation. The region spanning D1606 to D1647 is the EGF-like 27; calcium-binding domain. An O-linked (Glc) serine glycan is attached at S1628. Residues D1648–M1688 form the EGF-like 28; calcium-binding domain. Residue N1669 is glycosylated (N-linked (GlcNAc...) asparagine). Residues S1693–C1748 enclose the TB 7 domain. N1703 and N1713 each carry an N-linked (GlcNAc...) asparagine glycan. The region spanning D1766–E1807 is the EGF-like 29; calcium-binding domain. Intrachain disulfides connect C1770–C1782, C1777–C1791, C1793–C1806, C1812–C1824, C1818–C1833, C1835–C1847, C1853–C1865, C1860–C1874, C1876–C1889, C1895–C1905, C1900–C1914, C1916–C1928, C1934–C1947, C1942–C1956, C1958–C1971, C1977–C1989, C1984–C1998, C2000–C2011, C2017–C2029, C2024–C2038, C2040–C2053, C2061–C2083, C2070–C2096, C2084–C2099, C2085–C2111, C2131–C2142, C2137–C2151, C2153–C2164, C2170–C2181, C2176–C2190, C2192–C2204, C2210–C2221, C2217–C2230, C2232–C2245, C2251–C2265, C2258–C2274, C2276–C2289, C2295–C2307, C2302–C2316, and C2318–C2331. The 41-residue stretch at D1808 to N1848 folds into the EGF-like 30; calcium-binding domain. S1830 is a glycosylation site (O-linked (Glc) serine). The region spanning D1849–L1890 is the EGF-like 31; calcium-binding domain. S1871 is a glycosylation site (O-linked (Glc) serine). Residues D1891 to I1929 form the EGF-like 32; calcium-binding domain. An N-linked (GlcNAc...) asparagine glycan is attached at N1902. An O-linked (Glc) serine glycan is attached at S1911. One can recognise an EGF-like 33; calcium-binding domain in the interval D1930 to V1972. O-linked (Glc) serine glycosylation is present at S1953. Residues D1973–E2012 form the EGF-like 34; calcium-binding domain. In terms of domain architecture, EGF-like 35; calcium-binding spans D2013 to Q2054. S2035 is a glycosylation site (O-linked (Glc) serine). The region spanning S2059 to C2111 is the TB 8 domain. N2077 is a glycosylation site (N-linked (GlcNAc...) asparagine). The EGF-like 36; calcium-binding domain maps to D2127 to V2165. A glycan (O-linked (Glc) serine) is linked at S2148. The 40-residue stretch at D2166–E2205 folds into the EGF-like 37; calcium-binding domain. A glycan (N-linked (GlcNAc...) asparagine) is linked at N2178. In terms of domain architecture, EGF-like 38; calcium-binding spans D2206–K2246. Residue S2227 is glycosylated (O-linked (Glc) serine). The EGF-like 39; calcium-binding domain occupies D2247–V2290. The EGF-like 40; calcium-binding domain occupies D2291–L2332. Residue S2313 is glycosylated (O-linked (Glc) serine). Residues G2337–C2390 form the TB 9 domain. The EGF-like 41; calcium-binding domain maps to D2402–V2443. 21 disulfide bridges follow: C2406–C2418, C2413–C2427, C2429–C2442, C2448–C2459, C2455–C2468, C2470–C2483, C2489–C2500, C2496–C2509, C2511–C2522, C2528–C2541, C2535–C2550, C2552–C2565, C2571–C2581, C2577–C2590, C2592–C2605, C2611–C2622, C2617–C2631, C2633–C2646, C2652–C2663, C2659–C2672, and C2674–C2686. The region spanning D2444 to K2484 is the EGF-like 42; calcium-binding domain. O-linked (Glc) serine glycosylation occurs at S2465. The region spanning D2485–I2523 is the EGF-like 43; calcium-binding domain. Residues D2524–E2566 enclose the EGF-like 44; calcium-binding domain. O-linked (Glc) serine glycosylation is present at S2547. Residues D2567–V2606 enclose the EGF-like 45; calcium-binding domain. An EGF-like 46; calcium-binding domain is found at D2607–Q2647. An O-linked (Glc) serine glycan is attached at S2628. The EGF-like 47; calcium-binding domain maps to D2648 to V2687. S2702 bears the Phosphoserine; by FAM20C mark. S2709 carries the phosphoserine modification. The disordered stretch occupies residues R2726–E2746. An N-linked (GlcNAc...) asparagine glycan is attached at N2734. Residues E2735 to E2746 show a composition bias toward polar residues. N-linked (GlcNAc...) asparagine glycans are attached at residues N2750 and N2767.

Belongs to the fibrillin family. In terms of assembly, interacts with COL16A1. Interacts with integrin alpha-V/beta-3. Interacts with ADAMTS10; this interaction promotes microfibril assembly. Interacts with THSD4; this interaction promotes fibril formation. Interacts (via N-terminal domain) with FBLN2 and FBLN5. Interacts with ELN. Forms a ternary complex with ELN and FBLN2 or FBLN5 and a significant interaction with ELN seen only in the presence of FBLN2 or FBLN5. Interacts (via N-terminal domain) with LTBP2 (via C-terminal domain) in a Ca(+2)-dependent manner. Interacts (via N-terminal domain) with LTBP1 (via C-terminal domain). Interacts with integrins ITGA5:ITGB1, ITGAV:ITGB3 and ITGAV:ITGB6. Interacts (via N-terminal domain) with BMP2, BMP4, BMP7, BMP10 and GDF5. Interacts (via N-terminal domain) with MFAP2 and MFAP5. Interacts with ADAMTSL5. Interacts with MFAP4. Interacts (via N-terminal domain) with TNFSF11 in a Ca(+2)-dependent manner. Interacts (via N-terminal domain) with EFEMP2; this interaction inhibits EFEMP2 binding to LOX and ELN. In terms of processing, cleavage of N- and C-terminus by furin is required for incorporation into the extracellular matrix and assembly into microfibrils. The C-terminus, which corresponds to the Asprosin chain, was initially thought to constitute a propeptide. Fibrillin-1 and Asprosin chains are still linked together during the secretion from cells, but are subsequently separated by furin, an essential step for incorporation of Fibrillin-1 into the nascent microfibrils. Post-translationally, forms intermolecular disulfide bonds either with other fibrillin-1 molecules or with other components of the microfibrils. O-glycosylated on serine residues by POGLUT2 and POGLUT3 which is necessary for efficient protein secretion.

The protein resides in the secreted. The protein localises to the extracellular space. It localises to the extracellular matrix. Functionally, structural component of the 10-12 nm diameter microfibrils of the extracellular matrix, which conveys both structural and regulatory properties to load-bearing connective tissues. Fibrillin-1-containing microfibrils provide long-term force bearing structural support. In tissues such as the lung, blood vessels and skin, microfibrils form the periphery of the elastic fiber, acting as a scaffold for the deposition of elastin. In addition, microfibrils can occur as elastin-independent networks in tissues such as the ciliary zonule, tendon, cornea and glomerulus where they provide tensile strength and have anchoring roles. Fibrillin-1 also plays a key role in tissue homeostasis through specific interactions with growth factors, such as the bone morphogenetic proteins (BMPs), growth and differentiation factors (GDFs) and latent transforming growth factor-beta-binding proteins (LTBPs), cell-surface integrins and other extracellular matrix protein and proteoglycan components. Regulates osteoblast maturation by controlling TGF-beta bioavailability and calibrating TGF-beta and BMP levels, respectively. Negatively regulates osteoclastogenesis by binding and sequestering an osteoclast differentiation and activation factor TNFSF11. This leads to disruption of TNFSF11-induced Ca(2+) signaling and impairment of TNFSF11-mediated nuclear translocation and activation of transcription factor NFATC1 which regulates genes important for osteoclast differentiation and function. Mediates cell adhesion via its binding to cell surface receptors integrins ITGAV:ITGB3 and ITGA5:ITGB1. Binds heparin and this interaction has an important role in the assembly of microfibrils. Adipokine secreted by white adipose tissue that plays an important regulatory role in the glucose metabolism of liver, muscle and pancreas. Hormone that targets the liver in response to fasting to increase plasma glucose levels. Binds the olfactory receptor OR4M1 at the surface of hepatocytes and promotes hepatocyte glucose release by activating the protein kinase A activity in the liver, resulting in rapid glucose release into the circulation. May act as a regulator of adaptive thermogenesis by inhibiting browning and energy consumption, while increasing lipid deposition in white adipose tissue. Also acts as an orexigenic hormone that increases appetite: crosses the blood brain barrier and exerts effects on the hypothalamus. In the arcuate nucleus of the hypothalamus, asprosin directly activates orexigenic AgRP neurons and indirectly inhibits anorexigenic POMC neurons, resulting in appetite stimulation. Activates orexigenic AgRP neurons via binding to the olfactory receptor OR4M1. May also play a role in sperm motility in testis via interaction with OR4M1 receptor. This chain is Fibrillin-1, found in Homo sapiens (Human).